The primary structure comprises 114 residues: Transmembrane protein 256 homolog (114 aa).

An N-terminal signal peptide occupies residues 1–25 (MAAGRVWGRLGAVSGALAVTAGAYG). The Extracellular segment spans residues 26-64 (AHGFRRSDRDEYLKELFETGNRYHFLHSLALLAVPHCRR). The helical transmembrane segment at 65–85 (PLLAGSLLTSGIVLFSGTFYY) threads the bilayer. The Cytoplasmic portion of the chain corresponds to 86 to 93 (QALSGDPT). Residues 94 to 114 (LTKAAPYGGTLLILGWAAMAL) traverse the membrane as a helical segment.

The protein belongs to the TMEM256 family.

The protein resides in the cell membrane. The sequence is that of Transmembrane protein 256 homolog from Bufo gargarizans (Asian toad).